The sequence spans 419 residues: Adenylosuccinate synthetase (419 aa).

Residues 11 to 17 (GDEGKGK) and 39 to 41 (GHT) each bind GTP. Catalysis depends on D12, which acts as the Proton acceptor. 2 residues coordinate Mg(2+): D12 and G39. Residues 12-15 (DEGK), 37-40 (NAGH), T129, R143, N218, T233, and R297 each bind IMP. The Proton donor role is filled by H40. 293–299 (VTTGRKR) serves as a coordination point for substrate. GTP-binding positions include R299, 325 to 327 (KLD), and 407 to 409 (GTG).

This sequence belongs to the adenylosuccinate synthetase family. As to quaternary structure, homodimer. Requires Mg(2+) as cofactor.

It is found in the cytoplasm. The enzyme catalyses IMP + L-aspartate + GTP = N(6)-(1,2-dicarboxyethyl)-AMP + GDP + phosphate + 2 H(+). The protein operates within purine metabolism; AMP biosynthesis via de novo pathway; AMP from IMP: step 1/2. Plays an important role in the de novo pathway and in the salvage pathway of purine nucleotide biosynthesis. Catalyzes the first committed step in the biosynthesis of AMP from IMP. The polypeptide is Adenylosuccinate synthetase (Coccidioides posadasii (strain C735) (Valley fever fungus)).